We begin with the raw amino-acid sequence, 165 residues long: Large ribosomal subunit protein uL11 (165 aa).

Ser-38 is modified (phosphoserine). Lys-40 participates in a covalent cross-link: Glycyl lysine isopeptide (Lys-Gly) (interchain with G-Cter in SUMO2). Lys-48 is covalently cross-linked (Glycyl lysine isopeptide (Lys-Gly) (interchain with G-Cter in ubiquitin)). Lys-54 carries the N6-acetyllysine modification. Residue Lys-83 forms a Glycyl lysine isopeptide (Lys-Gly) (interchain with G-Cter in ubiquitin) linkage. Residue Ser-165 is modified to Phosphoserine.

It belongs to the universal ribosomal protein uL11 family. In terms of assembly, component of the large ribosomal subunit. Mature ribosomes consist of a small (40S) and a large (60S) subunit. The 40S subunit contains about 33 different proteins and 1 molecule of RNA (18S). The 60S subunit contains about 49 different proteins and 3 molecules of RNA (28S, 5.8S and 5S). Ubiquitinated at Lys-48 and Lys-83 by RNF14 and RNF25 in response to ribosome collisions (ribosome stalling).

The protein localises to the cytoplasm. Its function is as follows. Component of the large ribosomal subunit. The ribosome is a large ribonucleoprotein complex responsible for the synthesis of proteins in the cell. Binds directly to 26S ribosomal RNA. This Bos taurus (Bovine) protein is Large ribosomal subunit protein uL11 (RPL12).